Consider the following 83-residue polypeptide: Cytochrome b559 subunit alpha (83 aa).

The helical transmembrane segment at 21–35 threads the bilayer; the sequence is VIHSITIPSLFIAGW. Histidine 23 serves as a coordination point for heme.

It belongs to the PsbE/PsbF family. In terms of assembly, heterodimer of an alpha subunit and a beta subunit. PSII is composed of 1 copy each of membrane proteins PsbA, PsbB, PsbC, PsbD, PsbE, PsbF, PsbH, PsbI, PsbJ, PsbK, PsbL, PsbM, PsbT, PsbX, PsbY, PsbZ, Psb30/Ycf12, at least 3 peripheral proteins of the oxygen-evolving complex and a large number of cofactors. It forms dimeric complexes. Heme b serves as cofactor.

It is found in the plastid. The protein localises to the chloroplast thylakoid membrane. Its function is as follows. This b-type cytochrome is tightly associated with the reaction center of photosystem II (PSII). PSII is a light-driven water:plastoquinone oxidoreductase that uses light energy to abstract electrons from H(2)O, generating O(2) and a proton gradient subsequently used for ATP formation. It consists of a core antenna complex that captures photons, and an electron transfer chain that converts photonic excitation into a charge separation. In Phalaenopsis aphrodite subsp. formosana (Moth orchid), this protein is Cytochrome b559 subunit alpha.